Consider the following 187-residue polypeptide: Abscisic acid receptor PYL9 (187 aa).

Residues 27–178 form an START-like region; sequence HLCRENQCTS…NLKSLADVSE (152 aa). 2 cysteine pairs are disulfide-bonded: Cys-29–Cys-159 and Cys-34–Cys-159. Abscisate-binding positions include Lys-63, 91 to 96, 118 to 124, and Glu-143; these read ATTSTE and RLKNYSS. The Gate loop motif lies at 87–91; it reads SGLPA. Residues 117-119 carry the Latch loop motif; it reads HRL.

This sequence belongs to the PYR/PYL/RCAR abscisic acid intracellular receptor family. As to quaternary structure, homodimer. Monomer. Binds ABA on one subunit only. Binds to CARs protein in an ABA-independent manner, both at the plasma membrane and in the nucleus. Binds specifically (+)-ABA but not (-)-ABA. Interacts with HAB1, ABI1 and ABI2, and possibly with other PP2Cs. Interacts with TOPP1. Interacts with DDA1. In terms of tissue distribution, expressed in root tips, vascular tissues, stomata, flowers, pollen tubes and developing seeds.

Its subcellular location is the cytoplasm. It is found in the nucleus. It localises to the cell membrane. Functionally, receptor for abscisic acid (ABA) required for ABA-mediated responses such as stomatal closure and germination inhibition. Inhibits the activity of group-A protein phosphatases type 2C (PP2Cs) in an ABA-independent manner but more efficiently when activated by ABA. Confers enhanced sensitivity to ABA. Can be activated only by (+)-ABA but not by (-)-ABA. The sequence is that of Abscisic acid receptor PYL9 (PYL9) from Arabidopsis thaliana (Mouse-ear cress).